Here is a 436-residue protein sequence, read N- to C-terminus: GTPase Der (436 aa).

EngA-type G domains follow at residues 4–167 (PVIA…PKIE) and 176–351 (IRFS…ESHS). GTP is bound by residues 10–17 (GRPNVGKS), 57–61 (DTGGI), 119–122 (NKVD), 182–189 (GRPNVGKS), 229–233 (DTAGM), and 294–297 (NKWD). Residues 352-436 (IRIQTNVLND…PIHIIARARD (85 aa)) form the KH-like domain.

It belongs to the TRAFAC class TrmE-Era-EngA-EngB-Septin-like GTPase superfamily. EngA (Der) GTPase family. In terms of assembly, associates with the 50S ribosomal subunit.

Its function is as follows. GTPase that plays an essential role in the late steps of ribosome biogenesis. This is GTPase Der from Bacillus anthracis (strain A0248).